Consider the following 430-residue polypeptide: Enolase (430 aa).

Glutamine 166 lines the (2R)-2-phosphoglycerate pocket. Catalysis depends on glutamate 208, which acts as the Proton donor. Mg(2+)-binding residues include aspartate 245, glutamate 288, and aspartate 315. The (2R)-2-phosphoglycerate site is built by lysine 340, arginine 369, serine 370, and lysine 391. Catalysis depends on lysine 340, which acts as the Proton acceptor.

Belongs to the enolase family. Mg(2+) is required as a cofactor.

The protein localises to the cytoplasm. It is found in the secreted. It localises to the cell surface. The catalysed reaction is (2R)-2-phosphoglycerate = phosphoenolpyruvate + H2O. Its pathway is carbohydrate degradation; glycolysis; pyruvate from D-glyceraldehyde 3-phosphate: step 4/5. In terms of biological role, catalyzes the reversible conversion of 2-phosphoglycerate (2-PG) into phosphoenolpyruvate (PEP). It is essential for the degradation of carbohydrates via glycolysis. This Clostridium beijerinckii (strain ATCC 51743 / NCIMB 8052) (Clostridium acetobutylicum) protein is Enolase.